The chain runs to 226 residues: Leucyl/phenylalanyl-tRNA--protein transferase (226 aa).

The protein belongs to the L/F-transferase family.

It localises to the cytoplasm. It catalyses the reaction N-terminal L-lysyl-[protein] + L-leucyl-tRNA(Leu) = N-terminal L-leucyl-L-lysyl-[protein] + tRNA(Leu) + H(+). The enzyme catalyses N-terminal L-arginyl-[protein] + L-leucyl-tRNA(Leu) = N-terminal L-leucyl-L-arginyl-[protein] + tRNA(Leu) + H(+). It carries out the reaction L-phenylalanyl-tRNA(Phe) + an N-terminal L-alpha-aminoacyl-[protein] = an N-terminal L-phenylalanyl-L-alpha-aminoacyl-[protein] + tRNA(Phe). Functionally, functions in the N-end rule pathway of protein degradation where it conjugates Leu, Phe and, less efficiently, Met from aminoacyl-tRNAs to the N-termini of proteins containing an N-terminal arginine or lysine. This chain is Leucyl/phenylalanyl-tRNA--protein transferase, found in Pseudomonas putida (strain ATCC 47054 / DSM 6125 / CFBP 8728 / NCIMB 11950 / KT2440).